The primary structure comprises 201 residues: Small ribosomal subunit protein uS4 (201 aa).

Positions 91–151 (SRLDNVVYRA…EKSRSMLWFE (61 aa)) constitute an S4 RNA-binding domain.

It belongs to the universal ribosomal protein uS4 family. In terms of assembly, part of the 30S ribosomal subunit. Contacts protein S5. The interaction surface between S4 and S5 is involved in control of translational fidelity.

Functionally, one of the primary rRNA binding proteins, it binds directly to 16S rRNA where it nucleates assembly of the body of the 30S subunit. Its function is as follows. With S5 and S12 plays an important role in translational accuracy. The sequence is that of Small ribosomal subunit protein uS4 from Corynebacterium jeikeium (strain K411).